We begin with the raw amino-acid sequence, 117 residues long: Holo-[acyl-carrier-protein] synthase (117 aa).

Positions 8 and 57 each coordinate Mg(2+).

Belongs to the P-Pant transferase superfamily. AcpS family. Requires Mg(2+) as cofactor.

It localises to the cytoplasm. The catalysed reaction is apo-[ACP] + CoA = holo-[ACP] + adenosine 3',5'-bisphosphate + H(+). Its function is as follows. Transfers the 4'-phosphopantetheine moiety from coenzyme A to a Ser of acyl-carrier-protein. In Limosilactobacillus reuteri (Lactobacillus reuteri), this protein is Holo-[acyl-carrier-protein] synthase.